Here is a 486-residue protein sequence, read N- to C-terminus: 2-hydroxymuconic semialdehyde dehydrogenase (486 aa).

Active-site residues include Glu254 and Cys288.

It belongs to the aldehyde dehydrogenase family. As to quaternary structure, homodimer.

The enzyme catalyses (2Z,4E)-2-hydroxy-6-oxohexa-2,4-dienoate + NAD(+) + H2O = (2Z,4E)-2-hydroxyhexa-2,4-dienedioate + NADH + 2 H(+). It functions in the pathway aromatic compound metabolism; benzoate degradation via hydroxylation. Functionally, 2-hydroxymuconic acid semialdehyde can be converted to 2-hydroxypent-2,4-dienoate either directly by the action of 2-hydroxymuconic semialdehyde hydrolase (HMSH) or by the action of three sequential enzymes, the first of which is HMSD. Can oxidize not only 2-hydroxymuconic semialdehyde and its analogs but also benzaldehyde and its analogs. The polypeptide is 2-hydroxymuconic semialdehyde dehydrogenase (xylG) (Pseudomonas putida (Arthrobacter siderocapsulatus)).